A 289-amino-acid polypeptide reads, in one-letter code: MSEVSEAEKRRILREKRKQKFSKGAGSARLHKITTQQPGGASGDSTVTSAEISDNEGSLQRGSNSGQSTREIDDLLAAMDPPIEPAEPLESAAPEVAFIQQLMKMQQGSATPPADEKAGGLFSPLLERLAEQEAGGAPVVSGEVGVHQFQVRQLKAYMLLLRWAILLPFIYYVMHPGTAHWLHTSRFLHFVMEPRNFFMVFTTFEVASISIYYQVLLTLERTNKVNSLSYSSKLVTWAGLVPDGMLPIDNLQGKVVVALHYWDILSMYLTDLSLCLVAAGLMKYYHAAP.

Positions 1-10 are enriched in basic and acidic residues; sequence MSEVSEAEKR. Residues 1–68 form a disordered region; sequence MSEVSEAEKR…LQRGSNSGQS (68 aa). The Cytoplasmic portion of the chain corresponds to 1 to 153; that stretch reads MSEVSEAEKR…VGVHQFQVRQ (153 aa). Residues 11 to 21 are compositionally biased toward basic residues; it reads RILREKRKQKF. Residues 33–68 are compositionally biased toward polar residues; the sequence is ITTQQPGGASGDSTVTSAEISDNEGSLQRGSNSGQS. Residues 154–173 form a helical membrane-spanning segment; it reads LKAYMLLLRWAILLPFIYYV. At 174-196 the chain is on the lumenal side; it reads MHPGTAHWLHTSRFLHFVMEPRN. Residues 197-216 traverse the membrane as a helical segment; that stretch reads FFMVFTTFEVASISIYYQVL. Residues 217-263 are Cytoplasmic-facing; that stretch reads LTLERTNKVNSLSYSSKLVTWAGLVPDGMLPIDNLQGKVVVALHYWD. A helical membrane pass occupies residues 264-284; that stretch reads ILSMYLTDLSLCLVAAGLMKY. Residues 285 to 289 are Lumenal-facing; it reads YHAAP.

It belongs to the GET2 family. Component of the Golgi to ER traffic (GET) complex, which is composed of GET1, GET2 and GET3. Within the complex, GET1 and GET2 form a heterotetramer which is stabilized by phosphatidylinositol binding and which binds to the GET3 homodimer.

It localises to the endoplasmic reticulum membrane. The protein resides in the golgi apparatus membrane. Its function is as follows. Required for the post-translational delivery of tail-anchored (TA) proteins to the endoplasmic reticulum. Together with GET1, acts as a membrane receptor for soluble GET3, which recognizes and selectively binds the transmembrane domain of TA proteins in the cytosol. The GET complex cooperates with the HDEL receptor ERD2 to mediate the ATP-dependent retrieval of resident ER proteins that contain a C-terminal H-D-E-L retention signal from the Golgi to the ER. The chain is Golgi to ER traffic protein 2 from Eremothecium gossypii (strain ATCC 10895 / CBS 109.51 / FGSC 9923 / NRRL Y-1056) (Yeast).